The following is a 220-amino-acid chain: Nucleolar protein 3 (220 aa).

Residue Gly-2 is the site of N-myristoyl glycine attachment. The CARD domain maps to 4-95; sequence VQERPSETID…MPDPAWDWQH (92 aa). Residues 20–70 form an essential for interaction with BAX region; it reads VETLQADSGLLLDALVARGVLTGPEYEALDALPDAERRVRRLLLLVQSKGE. The tract at residues 111 to 220 is disordered; sequence GHWTPEAPSS…FQEEDESEDS (110 aa). Thr-149 is subject to Phosphothreonine; by CK2. Residues 152–220 show a composition bias toward acidic residues; it reads EPELEAEATE…FQEEDESEDS (69 aa).

In terms of assembly, oligomerizes (via CARD doamin). Interacts (via CARD domain) with CASP2; inhibits CASP2 activity in a phosphorylation-dependent manner. Interacts with CASP8; decreases CASP8 activity in a mitochondria localization- and phosphorylation-dependent manner and this interaction is dissociated by calcium. Interacts with TFPT; translocates NOL3 into the nucleus and negatively regulated TFPT-induced cell death. Interacts directly (via CARD domain) with FAS and FADD (via DED domain); inhibits death-inducing signaling complex (DISC) assembly by inhibiting the increase in FAS-FADD binding induced by FAS activation. Interacts (via CARD domain) with BAX (via a C-terminal 33 residues); inhibits BAX activation and translocation and consequently cytochrome c release from mitochondria. Interacts with PPM1G; may dephosphorylate NOL3. Interacts (via CARD domain) with BBC3 (via BH3 domain); preventing the association of BBC3 with BCL2 and resulting in activation of CASP8. Interacts (via CARD domain) with BAD(via BH3 domain); preventing the association of BAD with BCL2. Interacts directly (via CARD domain) with TNFRSF1A; inhibits TNF-signaling pathway. Phosphorylation at Thr-149 is required for its antiapoptotic effect by blocking death-inducing signaling complex death-inducing signaling complex (DISC) activity through the control of interaction with CASP8. Phosphorylation at Thr-149 results in translocation to mitochondria and this translocation enables the binding to CASP8. Dephosphorylated at Thr-149 by calcineurin; doesn't inhibit the association between FADD and CASP8 and the consequent apoptosis. In terms of processing, polyubiquitinated by MDM2; promoting proteasomal-dependent degradation in response to apoptotic stimuli.

It localises to the cytoplasm. It is found in the mitochondrion. The protein resides in the sarcoplasmic reticulum. Its subcellular location is the membrane. In terms of biological role, apoptosis repressor that blocks multiple modes of cell death. Inhibits extrinsic apoptotic pathways through two different ways. Firstly by interacting with FAS and FADD upon FAS activation blocking death-inducing signaling complex (DISC) assembly. Secondly by interacting with CASP8 in a mitochondria localization- and phosphorylation-dependent manner, limiting the amount of soluble CASP8 available for DISC-mediated activation. Inhibits intrinsic apoptotic pathway in response to a wide range of stresses, through its interaction with BAX resulting in BAX inactivation, preventing mitochondrial dysfunction and release of pro-apoptotic factors. Inhibits calcium-mediated cell death by functioning as a cytosolic calcium buffer, dissociating its interaction with CASP8 and maintaining calcium homeostasis. Negatively regulates oxidative stress-induced apoptosis by phosphorylation-dependent suppression of the mitochondria-mediated intrinsic pathway, by blocking CASP2 activation and BAX translocation. Negatively regulates hypoxia-induced apoptosis in part by inhibiting the release of cytochrome c from mitochondria in a caspase-independent manner. Also inhibits TNF-induced necrosis by preventing TNF-signaling pathway through TNFRSF1A interaction abrogating the recruitment of RIPK1 to complex I. Finally through its role as apoptosis repressor, promotes vascular remodeling through inhibition of apoptosis and stimulation of proliferation, in response to hypoxia. Inhibits too myoblast differentiation through caspase inhibition. This chain is Nucleolar protein 3 (Nol3), found in Mus musculus (Mouse).